Reading from the N-terminus, the 251-residue chain is Ubiquinone/menaquinone biosynthesis C-methyltransferase UbiE (251 aa).

S-adenosyl-L-methionine-binding positions include Thr74, Asp95, and 123 to 124 (NA).

Belongs to the class I-like SAM-binding methyltransferase superfamily. MenG/UbiE family.

The catalysed reaction is a 2-demethylmenaquinol + S-adenosyl-L-methionine = a menaquinol + S-adenosyl-L-homocysteine + H(+). It catalyses the reaction a 2-methoxy-6-(all-trans-polyprenyl)benzene-1,4-diol + S-adenosyl-L-methionine = a 5-methoxy-2-methyl-3-(all-trans-polyprenyl)benzene-1,4-diol + S-adenosyl-L-homocysteine + H(+). It participates in quinol/quinone metabolism; menaquinone biosynthesis; menaquinol from 1,4-dihydroxy-2-naphthoate: step 2/2. It functions in the pathway cofactor biosynthesis; ubiquinone biosynthesis. Its function is as follows. Methyltransferase required for the conversion of demethylmenaquinol (DMKH2) to menaquinol (MKH2) and the conversion of 2-polyprenyl-6-methoxy-1,4-benzoquinol (DDMQH2) to 2-polyprenyl-3-methyl-6-methoxy-1,4-benzoquinol (DMQH2). The protein is Ubiquinone/menaquinone biosynthesis C-methyltransferase UbiE of Shewanella pealeana (strain ATCC 700345 / ANG-SQ1).